We begin with the raw amino-acid sequence, 329 residues long: DNA-directed RNA polymerase subunit alpha (329 aa).

Residues 1–235 are alpha N-terminal domain (alpha-NTD); sequence MQGSVTEFLK…EQLEAFVDLR (235 aa). Residues 249–329 are alpha C-terminal domain (alpha-CTD); the sequence is FDPILLRPVD…NWPPASIADE (81 aa).

The protein belongs to the RNA polymerase alpha chain family. Homodimer. The RNAP catalytic core consists of 2 alpha, 1 beta, 1 beta' and 1 omega subunit. When a sigma factor is associated with the core the holoenzyme is formed, which can initiate transcription.

The catalysed reaction is RNA(n) + a ribonucleoside 5'-triphosphate = RNA(n+1) + diphosphate. In terms of biological role, DNA-dependent RNA polymerase catalyzes the transcription of DNA into RNA using the four ribonucleoside triphosphates as substrates. The chain is DNA-directed RNA polymerase subunit alpha from Yersinia pestis bv. Antiqua (strain Antiqua).